Here is a 187-residue protein sequence, read N- to C-terminus: Ribosome-recycling factor (187 aa).

This sequence belongs to the RRF family.

The protein resides in the cytoplasm. Its function is as follows. Responsible for the release of ribosomes from messenger RNA at the termination of protein biosynthesis. May increase the efficiency of translation by recycling ribosomes from one round of translation to another. This is Ribosome-recycling factor from Paracoccus denitrificans (strain Pd 1222).